The primary structure comprises 394 residues: Elongation factor Tu (394 aa).

The tr-type G domain maps to 10 to 204 (KEHANIGTIG…AVDDYIPTPE (195 aa)). The interval 19-26 (GHVDHGKT) is G1. 19–26 (GHVDHGKT) is a GTP binding site. Residue Thr26 coordinates Mg(2+). Positions 60–64 (GITIN) are G2. Residues 81-84 (DCPG) are G3. GTP is bound by residues 81–85 (DCPGH) and 136–139 (NKVD). Residues 136-139 (NKVD) form a G4 region. A G5 region spans residues 174 to 176 (SAL).

Belongs to the TRAFAC class translation factor GTPase superfamily. Classic translation factor GTPase family. EF-Tu/EF-1A subfamily. As to quaternary structure, monomer.

The protein localises to the cytoplasm. The catalysed reaction is GTP + H2O = GDP + phosphate + H(+). Functionally, GTP hydrolase that promotes the GTP-dependent binding of aminoacyl-tRNA to the A-site of ribosomes during protein biosynthesis. This Staphylococcus haemolyticus (strain JCSC1435) protein is Elongation factor Tu.